The chain runs to 466 residues: Argininosuccinate lyase (466 aa).

This sequence belongs to the lyase 1 family. Argininosuccinate lyase subfamily.

It localises to the cytoplasm. It carries out the reaction 2-(N(omega)-L-arginino)succinate = fumarate + L-arginine. Its pathway is amino-acid biosynthesis; L-arginine biosynthesis; L-arginine from L-ornithine and carbamoyl phosphate: step 3/3. The sequence is that of Argininosuccinate lyase from Bartonella bacilliformis (strain ATCC 35685 / KC583 / Herrer 020/F12,63).